A 467-amino-acid chain; its full sequence is Mitochondrial distribution and morphology protein 10 (467 aa).

The disordered stretch occupies residues 361-393; sequence GLPDTAPSRNRECDDLPPPRRDNYHHQRSPHAS. A compositionally biased stretch (basic and acidic residues) spans 369 to 385; the sequence is RNRECDDLPPPRRDNYH.

This sequence belongs to the MDM10 family. Component of the ER-mitochondria encounter structure (ERMES) or MDM complex, composed of MMM1, MDM10, MDM12 and MDM34. Associates with the mitochondrial outer membrane sorting assembly machinery SAM(core) complex.

The protein localises to the mitochondrion outer membrane. Functionally, component of the ERMES/MDM complex, which serves as a molecular tether to connect the endoplasmic reticulum and mitochondria. Components of this complex are involved in the control of mitochondrial shape and protein biogenesis and may function in phospholipid exchange. MDM10 is involved in the late assembly steps of the general translocase of the mitochondrial outer membrane (TOM complex). Functions in the TOM40-specific route of the assembly of outer membrane beta-barrel proteins, including the association of TOM40 with the receptor TOM22 and small TOM proteins. Can associate with the SAM(core) complex as well as the MDM12-MMM1 complex, both involved in late steps of the major beta-barrel assembly pathway, that is responsible for biogenesis of all outer membrane beta-barrel proteins. May act as a switch that shuttles between both complexes and channels precursor proteins into the TOM40-specific pathway. Plays a role in mitochondrial morphology and in the inheritance of mitochondria. The protein is Mitochondrial distribution and morphology protein 10 of Ajellomyces capsulatus (strain NAm1 / WU24) (Darling's disease fungus).